The chain runs to 854 residues: DNA mismatch repair protein MutS (854 aa).

Residues 1 to 21 form a disordered region; the sequence is MTASDIQPTEPHTPPTPHADT. Residue 658–665 coordinates ATP; it reads GPNASGKS.

The protein belongs to the DNA mismatch repair MutS family.

In terms of biological role, this protein is involved in the repair of mismatches in DNA. It is possible that it carries out the mismatch recognition step. This protein has a weak ATPase activity. In Trichormus variabilis (strain ATCC 29413 / PCC 7937) (Anabaena variabilis), this protein is DNA mismatch repair protein MutS.